Consider the following 168-residue polypeptide: Small ribosomal subunit protein bS6 (168 aa).

The disordered stretch occupies residues 97–168 (EEGPSAMMRK…APAPAAATEE (72 aa)). The span at 105-158 (RKADRDRDRDDRGGFRGDREGGFRGDREGGFRGGDREGGGFRGDRGPRRPRDDA) shows a compositional bias: basic and acidic residues.

The protein belongs to the bacterial ribosomal protein bS6 family.

Binds together with bS18 to 16S ribosomal RNA. This is Small ribosomal subunit protein bS6 from Rhodopseudomonas palustris (strain BisB18).